The following is a 620-amino-acid chain: Zinc finger protein GLIS1 (620 aa).

Residues 108-132 (PLTGDLGGPSKRARPGPASTDSHEG) form a disordered region. A C2H2-type 1 zinc finger spans residues 195 to 220 (QACRWVDCCAAYEQQEELVRHIEKSH). A C2H2-type 2; atypical zinc finger spans residues 229–256 (FTCFWAGCVRRYKPFNARYKLLIHMRVH). 3 C2H2-type zinc fingers span residues 262-286 (NKCM…LRSH), 292-316 (YLCQ…QRTH), and 322-346 (YACQ…VKAH). Positions 340–356 (RKHVKAHSAKEQQVRKK) match the Bipartite nuclear localization signal motif. The segment at 414 to 515 (ASGLLPPAHD…PPLPSPQGYQ (102 aa)) is disordered. Positions 477–488 (SSQSHSPGGQPF) are enriched in low complexity. The segment covering 489–510 (PTLPSKPSYPPFQSPPPPPLPS) has biased composition (pro residues).

It belongs to the GLI C2H2-type zinc-finger protein family. In terms of assembly, interacts with KLF4. Interacts with POU5F1 and/or POU5F1B. Interacts with SOX2.

The protein resides in the nucleus. Functionally, acts both as a repressor and an activator of transcription. Binds to the consensus sequence 5'-GACCACCCAC-3'. By controlling the expression of genes involved in cell differentiation inhibits the lineage commitment of multipotent cells. Prevents, for instance, the differentiation of multipotent mesenchymal cells into adipocyte and osteoblast. The protein is Zinc finger protein GLIS1 of Homo sapiens (Human).